The primary structure comprises 242 residues: MISRIQELVAIVPAAGIGARMGAEIPKQYLMLNHQPILAHTLDRLLEHPRIDKVIIALSPEDSHFAKLSQASHPKLMTVIGGKERADSVLSALKVASQSAWALVHDAARPCLSAADIDKLIAACETEEGHQQGAILAMPVRDTMKRSGKGGAIQETVCRENLWHALTPQLFPVISLKQNLADALAAQVAITDEASAMEWAGGQPLLVSGRFDNIKVTHPEDLQLAALYLQAAASDPNSSTGE.

Belongs to the IspD/TarI cytidylyltransferase family. IspD subfamily.

It catalyses the reaction 2-C-methyl-D-erythritol 4-phosphate + CTP + H(+) = 4-CDP-2-C-methyl-D-erythritol + diphosphate. It participates in isoprenoid biosynthesis; isopentenyl diphosphate biosynthesis via DXP pathway; isopentenyl diphosphate from 1-deoxy-D-xylulose 5-phosphate: step 2/6. In terms of biological role, catalyzes the formation of 4-diphosphocytidyl-2-C-methyl-D-erythritol from CTP and 2-C-methyl-D-erythritol 4-phosphate (MEP). The sequence is that of 2-C-methyl-D-erythritol 4-phosphate cytidylyltransferase from Shewanella loihica (strain ATCC BAA-1088 / PV-4).